A 116-amino-acid chain; its full sequence is Iron-sulfur cluster insertion protein ErpA (116 aa).

Iron-sulfur cluster-binding residues include Cys44, Cys108, and Cys110.

This sequence belongs to the HesB/IscA family. Homodimer. Requires iron-sulfur cluster as cofactor.

In terms of biological role, required for insertion of 4Fe-4S clusters for at least IspG. The sequence is that of Iron-sulfur cluster insertion protein ErpA from Shewanella loihica (strain ATCC BAA-1088 / PV-4).